Here is a 70-residue protein sequence, read N- to C-terminus: Large ribosomal subunit protein bL31 (70 aa).

Positions 16, 18, 37, and 40 each coordinate Zn(2+).

This sequence belongs to the bacterial ribosomal protein bL31 family. Type A subfamily. As to quaternary structure, part of the 50S ribosomal subunit. Requires Zn(2+) as cofactor.

Binds the 23S rRNA. The sequence is that of Large ribosomal subunit protein bL31 from Haemophilus influenzae (strain PittEE).